The primary structure comprises 138 residues: uncharacterized protein (138 aa).

Transmembrane regions (helical) follow at residues 21–43 (TAFI…AGGA) and 48–65 (SLIA…YAII).

The protein resides in the cell membrane. This is an uncharacterized protein from Archaeoglobus fulgidus (strain ATCC 49558 / DSM 4304 / JCM 9628 / NBRC 100126 / VC-16).